A 137-amino-acid polypeptide reads, in one-letter code: Nucleoside diphosphate kinase (137 aa).

Residues K9, F57, R85, T91, R102, and N112 each coordinate ATP. The active-site Pros-phosphohistidine intermediate is H115.

This sequence belongs to the NDK family. In terms of assembly, homotetramer. Mg(2+) is required as a cofactor.

The protein localises to the cytoplasm. It carries out the reaction a 2'-deoxyribonucleoside 5'-diphosphate + ATP = a 2'-deoxyribonucleoside 5'-triphosphate + ADP. The catalysed reaction is a ribonucleoside 5'-diphosphate + ATP = a ribonucleoside 5'-triphosphate + ADP. Functionally, major role in the synthesis of nucleoside triphosphates other than ATP. The ATP gamma phosphate is transferred to the NDP beta phosphate via a ping-pong mechanism, using a phosphorylated active-site intermediate. The chain is Nucleoside diphosphate kinase from Leptospira interrogans serogroup Icterohaemorrhagiae serovar Lai (strain 56601).